The following is a 278-amino-acid chain: Secreted RxLR effector protein 151 (278 aa).

Residues 1 to 18 form the signal peptide; it reads MRNRAVLFGLFFIGYSSC. Positions 49–64 match the RxLR-dEER motif; that stretch reads RLLQVDGPKRILAEER.

It belongs to the RxLR effector family.

The protein resides in the secreted. It is found in the host endoplasmic reticulum membrane. Its function is as follows. Secreted effector that completely suppresses the host cell death induced by cell death-inducing proteins. The polypeptide is Secreted RxLR effector protein 151 (Plasmopara viticola (Downy mildew of grapevine)).